The sequence spans 235 residues: MTKGILLGDKFPDFRAETNEGFIPSFYDWIGKDSWAILFSHPRDFTPVCTTELARLVQLAPEFKKRNVKLIGLSCDSAESHRKWVDDIMAVCKMKCNDGDTCCSGNKLPFPIIADENRFLATELGMMDPDERDENGNALTARCVFIIGPEKTLKLSILYPATTGRNFDEILRVVDSLQLTAVKLVATPVDWKGGDDCVVLPTIDDTEAKKLFGEKINTIELPSGKHYLRMVAHPK.

The region spanning 5 to 179 is the Thioredoxin domain; that stretch reads ILLGDKFPDF…ILRVVDSLQL (175 aa). Cysteine 49 is a catalytic residue. Cysteine 49 acts as the Cysteine sulfenic acid (-SOH) intermediate in catalysis.

The protein belongs to the peroxiredoxin family. Prx6 subfamily.

The protein resides in the cytoplasm. It catalyses the reaction a hydroperoxide + [protein]-dithiol = [protein]-disulfide + an alcohol + H2O. In terms of biological role, thiol-specific peroxidase that catalyzes the reduction of hydrogen peroxide and organic hydroperoxides to water and alcohols, respectively. Plays a role in cell protection against oxidative stress by detoxifying peroxides. The sequence is that of 1-Cys peroxiredoxin from Dirofilaria immitis (Canine heartworm).